Here is a 148-residue protein sequence, read N- to C-terminus: Nucleoside diphosphate kinase (148 aa).

The ATP site is built by Lys9, Phe57, Arg85, Thr91, Arg102, and Asn112. At Thr91 the chain carries Phosphothreonine. His115 functions as the Pros-phosphohistidine intermediate in the catalytic mechanism. The residue at position 122 (Ser122) is a Phosphoserine.

This sequence belongs to the NDK family. In terms of assembly, homotetramer. Mg(2+) serves as cofactor.

The protein resides in the cytoplasm. The catalysed reaction is a 2'-deoxyribonucleoside 5'-diphosphate + ATP = a 2'-deoxyribonucleoside 5'-triphosphate + ADP. It catalyses the reaction a ribonucleoside 5'-diphosphate + ATP = a ribonucleoside 5'-triphosphate + ADP. Functionally, major role in the synthesis of nucleoside triphosphates other than ATP. The ATP gamma phosphate is transferred to the NDP beta phosphate via a ping-pong mechanism, using a phosphorylated active-site intermediate. The sequence is that of Nucleoside diphosphate kinase from Bacillus cereus (strain ATCC 10987 / NRS 248).